Consider the following 207-residue polypeptide: Large ribosomal subunit protein uL4 (207 aa).

The segment at 49–78 (HAVKNRSAVSGGGRKPWRQKGTGRARQGSI) is disordered.

The protein belongs to the universal ribosomal protein uL4 family. In terms of assembly, part of the 50S ribosomal subunit.

One of the primary rRNA binding proteins, this protein initially binds near the 5'-end of the 23S rRNA. It is important during the early stages of 50S assembly. It makes multiple contacts with different domains of the 23S rRNA in the assembled 50S subunit and ribosome. Functionally, forms part of the polypeptide exit tunnel. In Streptococcus thermophilus (strain CNRZ 1066), this protein is Large ribosomal subunit protein uL4.